The primary structure comprises 97 residues: Defective intron-associated endonuclease 3 (97 aa).

In terms of biological role, this endonuclease is specific to the nrdB gene splice junction and is involved in intron homing. The protein is Defective intron-associated endonuclease 3 (ITEVIIIR) of Escherichia coli (Bacteriophage T4).